We begin with the raw amino-acid sequence, 207 residues long: GILT-like protein 2 (207 aa).

Residues 1-19 (MRAAVFVCLLLGWVGVATP) form the signal peptide. Residues Cys-40 and Cys-43 are joined by a disulfide bond. The N-linked (GlcNAc...) asparagine glycan is linked to Asn-182.

Belongs to the GILT family.

Its subcellular location is the secreted. Its function is as follows. Probable lysosomal thiol reductase that can reduce protein disulfide bonds. Involved in the immune response to bacterial infection. In Drosophila melanogaster (Fruit fly), this protein is GILT-like protein 2.